A 153-amino-acid chain; its full sequence is Superoxide dismutase [Cu-Zn] (153 aa).

The Cu cation site is built by His-45, His-47, and His-62. A disulfide bridge connects residues Cys-56 and Cys-145. 4 residues coordinate Zn(2+): His-62, His-70, His-79, and Asp-82. Residue His-119 participates in Cu cation binding.

Belongs to the Cu-Zn superoxide dismutase family. In terms of assembly, homodimer. It depends on Cu cation as a cofactor. Zn(2+) is required as a cofactor.

Its subcellular location is the cytoplasm. The catalysed reaction is 2 superoxide + 2 H(+) = H2O2 + O2. Destroys radicals which are normally produced within the cells and which are toxic to biological systems. In Drosophila orena (Fruit fly), this protein is Superoxide dismutase [Cu-Zn].